Consider the following 194-residue polypeptide: Cysteine and glycine-rich protein 3 (194 aa).

Residues 1-5 (MPNWG) form an interaction with TCAP region. The LIM zinc-binding 1 domain occupies 10-61 (CGACEKTVYHAEEIQCNGRSFHKTCFHCMACRKALDSTTVAAHESEIYCKVC). The short motif at 64–69 (RRYGPK) is the Nuclear localization signal element. Residues 94–105 (QSPKPARAATTS) form an interaction with CLF2 region. A phosphoserine mark is found at S95, S111, and S153. Positions 120–171 (CPRCGKSVYAAEKVMGGGKPWHKTCFRCAICGKSLESTNVTDKDGELYCKVC) constitute an LIM zinc-binding 2 domain.

In terms of assembly, self-associates. Oligomeric in the cytoplasm and monomeric in the nucleus. Homooligomers preferentially form along the actin cytoskeleton. Interacts with TCAP. Interacts with LDHD, MYOD1, MYOG, ACTN2, NRAP, MYF6. Interacts (via N-terminus)D with GLRX3 (via C-terminus) and PPP3CA; GLRX3 and calcineurin compete for interaction with CSRP3. Interacts with CFL2; the stoichiometry influences F-actin depolymerization and possibly two molecules of CFL2 can interact with one molecule of CSRP3 resulting in the highest functional impact; the interaction is stronger with phosphorylated CFL2. In terms of processing, phosphorylated by PKC/PRKCA.

It localises to the nucleus. Its subcellular location is the cytoplasm. The protein resides in the cytoskeleton. The protein localises to the myofibril. It is found in the sarcomere. It localises to the z line. Functionally, positive regulator of myogenesis. Acts as a cofactor for myogenic bHLH transcription factors such as MYOD1, and probably MYOG and MYF6. Enhances the DNA-binding activity of the MYOD1:TCF3 isoform E47 complex and may promote formation of a functional MYOD1:TCF3 isoform E47:MEF2A complex involved in myogenesis. Plays a crucial and specific role in the organization of cytosolic structures in cardiomyocytes. Could play a role in mechanical stretch sensing. May be a scaffold protein that promotes the assembly of interacting proteins at Z-line structures. It is essential for calcineurin anchorage to the Z line. Required for stress-induced calcineurin-NFAT activation. The role in regulation of cytoskeleton dynamics by association with CFL2 is reported conflictingly. Proposed to contribute to the maintenance of muscle cell integrity through an actin-based mechanism. Can directly bind to actin filaments, cross-link actin filaments into bundles without polarity selectivity and protect them from dilution- and cofilin-mediated depolymerization; the function seems to involve its self-association. In vitro can inhibit PKC/PRKCA activity. Proposed to be involved in cardiac stress signaling by down-regulating excessive PKC/PRKCA signaling. The chain is Cysteine and glycine-rich protein 3 (Csrp3) from Mus musculus (Mouse).